Here is a 327-residue protein sequence, read N- to C-terminus: MKFEDFKIMATASSAPDHVVTNDELATMMDTSDEWITQRTGIKRRRIATEETTSSMCTDVATQLIAQSDLTAKDIDLIAVATMSPDYLTPSVSAMVQGNIGADHAIAFDIDAACSGFVYGLHLVKQMLIANQQKNAILIGGETLSKLLDWSDRSTAVLFGDGAGGVLIRNTAVDKGSFISEDLRTLGNLGQYLTAGQTGNPSPFATDQQPFSPFFKMSGRRVYSFAVKNVPESINDALKQANLTADEVDCFVLHQANRRIVERIADELAVSMAKFPINIDEYGNTAAASEPILLDQLVKQKIIKRGDVIALSGFGGGLTVGTMIMKY.

Active-site residues include Cys-114 and His-254. The tract at residues 255–259 (QANRR) is ACP-binding. Residue Asn-284 is part of the active site.

The protein belongs to the thiolase-like superfamily. FabH family. In terms of assembly, homodimer.

It localises to the cytoplasm. The catalysed reaction is malonyl-[ACP] + acetyl-CoA + H(+) = 3-oxobutanoyl-[ACP] + CO2 + CoA. It participates in lipid metabolism; fatty acid biosynthesis. Its function is as follows. Catalyzes the condensation reaction of fatty acid synthesis by the addition to an acyl acceptor of two carbons from malonyl-ACP. Catalyzes the first condensation reaction which initiates fatty acid synthesis and may therefore play a role in governing the total rate of fatty acid production. Possesses both acetoacetyl-ACP synthase and acetyl transacylase activities. Its substrate specificity determines the biosynthesis of branched-chain and/or straight-chain of fatty acids. The chain is Beta-ketoacyl-[acyl-carrier-protein] synthase III from Lactobacillus helveticus (strain DPC 4571).